A 494-amino-acid chain; its full sequence is Ketol-acid reductoisomerase (NADP(+)) (494 aa).

The 195-residue stretch at 14–208 folds into the KARI N-terminal Rossmann domain; that stretch reads LDQLGRCRFM…GGHRAGCLES (195 aa). NADP(+) is bound by residues 45 to 48, R68, R76, S78, and 108 to 110; these read CGAQ and DKQ. The active site involves H132. G158 serves as a coordination point for NADP(+). KARI C-terminal knotted domains follow at residues 209 to 344 and 345 to 487; these read SFVA…NYPA and SDVE…MSDM. Positions 217, 221, 389, and 393 each coordinate Mg(2+). S414 serves as a coordination point for substrate.

Belongs to the ketol-acid reductoisomerase family. Requires Mg(2+) as cofactor.

The catalysed reaction is (2R)-2,3-dihydroxy-3-methylbutanoate + NADP(+) = (2S)-2-acetolactate + NADPH + H(+). It carries out the reaction (2R,3R)-2,3-dihydroxy-3-methylpentanoate + NADP(+) = (S)-2-ethyl-2-hydroxy-3-oxobutanoate + NADPH + H(+). Its pathway is amino-acid biosynthesis; L-isoleucine biosynthesis; L-isoleucine from 2-oxobutanoate: step 2/4. The protein operates within amino-acid biosynthesis; L-valine biosynthesis; L-valine from pyruvate: step 2/4. In terms of biological role, involved in the biosynthesis of branched-chain amino acids (BCAA). Catalyzes an alkyl-migration followed by a ketol-acid reduction of (S)-2-acetolactate (S2AL) to yield (R)-2,3-dihydroxy-isovalerate. In the isomerase reaction, S2AL is rearranged via a Mg-dependent methyl migration to produce 3-hydroxy-3-methyl-2-ketobutyrate (HMKB). In the reductase reaction, this 2-ketoacid undergoes a metal-dependent reduction by NADPH to yield (R)-2,3-dihydroxy-isovalerate. The protein is Ketol-acid reductoisomerase (NADP(+)) of Vibrio atlanticus (strain LGP32) (Vibrio splendidus (strain Mel32)).